A 364-amino-acid chain; its full sequence is Chorismate synthase (364 aa).

Arg-48 and Arg-54 together coordinate NADP(+). FMN contacts are provided by residues 125–127 (RSS), 238–239 (NA), Gly-278, 293–297 (KPTSS), and Arg-319.

It belongs to the chorismate synthase family. As to quaternary structure, homotetramer. FMNH2 is required as a cofactor.

The catalysed reaction is 5-O-(1-carboxyvinyl)-3-phosphoshikimate = chorismate + phosphate. The protein operates within metabolic intermediate biosynthesis; chorismate biosynthesis; chorismate from D-erythrose 4-phosphate and phosphoenolpyruvate: step 7/7. Its function is as follows. Catalyzes the anti-1,4-elimination of the C-3 phosphate and the C-6 proR hydrogen from 5-enolpyruvylshikimate-3-phosphate (EPSP) to yield chorismate, which is the branch point compound that serves as the starting substrate for the three terminal pathways of aromatic amino acid biosynthesis. This reaction introduces a second double bond into the aromatic ring system. The sequence is that of Chorismate synthase from Marinobacter nauticus (strain ATCC 700491 / DSM 11845 / VT8) (Marinobacter aquaeolei).